A 699-amino-acid polypeptide reads, in one-letter code: Condensin complex subunit 2 (699 aa).

Disordered stretches follow at residues 1–35 (MSTS…SAAA) and 176–203 (ESQA…KRRK).

This sequence belongs to the CND2 (condensin subunit 2) family. In terms of assembly, component of the condensin complex, which contains the XCAP-E/SMC2 and XCAP-C/SMC4 heterodimer, and three non SMC subunits that probably regulate the complex: XCAP-H/NCAPH, XCAP-D2/NCAPD2 and XCAP-G/NCAPG. Phosphorylated by CDK1. Its phosphorylation, as well as that of XCAP-D2 and XCAP-G subunits, activates the condensin complex and is required for chromosome condensation.

It is found in the nucleus. Its subcellular location is the cytoplasm. The protein localises to the chromosome. Regulatory subunit of the condensin complex, a complex required for conversion of interphase chromatin into mitotic-like condense chromosomes. The condensin complex probably introduces positive supercoils into relaxed DNA in the presence of type I topoisomerases and converts nicked DNA into positive knotted forms in the presence of type II topoisomerase. This is Condensin complex subunit 2 (ncaph) from Xenopus laevis (African clawed frog).